Consider the following 31-residue polypeptide: Photosystem I reaction center subunit XII (31 aa).

The chain crosses the membrane as a helical span at residues 6–25; it reads TQILAALVVALLPAFLAFRL.

The protein belongs to the PsaM family.

It localises to the cellular thylakoid membrane. In Synechocystis sp. (strain ATCC 27184 / PCC 6803 / Kazusa), this protein is Photosystem I reaction center subunit XII.